The primary structure comprises 460 residues: Notoamide biosynthesis cluster transcriptional coactivator notR (460 aa).

Residues 74–145 enclose the HTH iclR-type domain; that stretch reads LQDLARQVEI…EPMPNYVSHT (72 aa). A DNA-binding region (H-T-H motif) is located at residues 107–126; sequence IQDLADLAGVPDIQLRRVIR. Residues 300 to 320 are disordered; that stretch reads TRDFTPQPESSPRPGSASSRV.

It localises to the nucleus. In terms of biological role, transcription factor that probably regulates the expression of the gene cluster that mediates the biosynthesis of notoamide, a fungal indole alkaloid that belongs to a family of natural products containing a characteristic bicyclo[2.2.2]diazaoctane core. The protein is Notoamide biosynthesis cluster transcriptional coactivator notR of Aspergillus sp. (strain MF297-2).